A 257-amino-acid polypeptide reads, in one-letter code: UPF0246 protein Shew185_1115 (257 aa).

It belongs to the UPF0246 family.

The sequence is that of UPF0246 protein Shew185_1115 from Shewanella baltica (strain OS185).